Reading from the N-terminus, the 366-residue chain is NADH-quinone oxidoreductase subunit D (366 aa).

This sequence belongs to the complex I 49 kDa subunit family. NDH-1 is composed of 14 different subunits. Subunits NuoB, C, D, E, F, and G constitute the peripheral sector of the complex.

It localises to the cell membrane. The catalysed reaction is a quinone + NADH + 5 H(+)(in) = a quinol + NAD(+) + 4 H(+)(out). NDH-1 shuttles electrons from NADH, via FMN and iron-sulfur (Fe-S) centers, to quinones in the respiratory chain. The immediate electron acceptor for the enzyme in this species is believed to be a menaquinone. Couples the redox reaction to proton translocation (for every two electrons transferred, four hydrogen ions are translocated across the cytoplasmic membrane), and thus conserves the redox energy in a proton gradient. The polypeptide is NADH-quinone oxidoreductase subunit D (Geobacillus thermodenitrificans (strain NG80-2)).